The primary structure comprises 245 residues: Probable transcriptional regulatory protein TP_0474 (245 aa).

It belongs to the TACO1 family.

The protein localises to the cytoplasm. In Treponema pallidum (strain Nichols), this protein is Probable transcriptional regulatory protein TP_0474.